The chain runs to 258 residues: Deoxyribose-phosphate aldolase (258 aa).

D101 functions as the Proton donor/acceptor in the catalytic mechanism. K166 functions as the Schiff-base intermediate with acetaldehyde in the catalytic mechanism. Catalysis depends on K200, which acts as the Proton donor/acceptor.

This sequence belongs to the DeoC/FbaB aldolase family. DeoC type 2 subfamily.

It localises to the cytoplasm. The enzyme catalyses 2-deoxy-D-ribose 5-phosphate = D-glyceraldehyde 3-phosphate + acetaldehyde. The protein operates within carbohydrate degradation; 2-deoxy-D-ribose 1-phosphate degradation; D-glyceraldehyde 3-phosphate and acetaldehyde from 2-deoxy-alpha-D-ribose 1-phosphate: step 2/2. In terms of biological role, catalyzes a reversible aldol reaction between acetaldehyde and D-glyceraldehyde 3-phosphate to generate 2-deoxy-D-ribose 5-phosphate. This is Deoxyribose-phosphate aldolase from Actinobacillus pleuropneumoniae serotype 7 (strain AP76).